A 145-amino-acid polypeptide reads, in one-letter code: Ribonuclease H (145 aa).

An RNase H type-1 domain is found at 1–141 (MQEVTIYSDG…ADALANRGVE (141 aa)). Residues aspartate 9, glutamate 47, aspartate 69, and aspartate 133 each coordinate Mg(2+).

This sequence belongs to the RNase H family. As to quaternary structure, monomer. Requires Mg(2+) as cofactor.

The protein resides in the cytoplasm. The catalysed reaction is Endonucleolytic cleavage to 5'-phosphomonoester.. Its function is as follows. Endonuclease that specifically degrades the RNA of RNA-DNA hybrids. In Cupriavidus necator (strain ATCC 17699 / DSM 428 / KCTC 22496 / NCIMB 10442 / H16 / Stanier 337) (Ralstonia eutropha), this protein is Ribonuclease H.